Reading from the N-terminus, the 1482-residue chain is Lysine-specific demethylase rbr-2 (1482 aa).

Residues 1–45 (MRGRRQEDIATTSSAPSTSTSHKKKTVSSNGSFRPRTQSNPGGKM) are disordered. Residues 11–20 (TTSSAPSTST) are compositionally biased toward low complexity. Residues 30–41 (NGSFRPRTQSNP) show a composition bias toward polar residues. Residues 61 to 102 (APVYYPTSEEFADPIEYVAKIRPDAERYGVVKIVPPSDFKPP) form the JmjN domain. The region spanning 126 to 223 (VKEKHTFIER…HIEPFNRNLK (98 aa)) is the ARID domain. A disordered region spans residues 244–316 (YQHHHGTMRS…SKTEEDEEEN (73 aa)). Positions 251 to 264 (MRSEPENTDGKNTE) are enriched in basic and acidic residues. Over residues 277–288 (GRRRSKNKKPVP) the composition is skewed to basic residues. Residues 322–374 (QVYCVSCNEGKDEDLLLLCDIEGCNSGRHTYCCDPVLDEVPEGEWRCPKCIES) form a PHD-type 1 zinc finger. In terms of domain architecture, JmjC spans 471–637 (QYANHAWNLN…KGRECVQSYS (167 aa)). Fe cation contacts are provided by His-517, Asp-520, and His-605. Residues 1206 to 1260 (LEGCCCLGGNKSDSSESVLSCIMCESQFHVRCCEWSTFFQHLPKGCFMCVRCLRG) form a PHD-type 2 zinc finger. A disordered region spans residues 1361 to 1403 (QQRPVKSKPSASLFDPKLNSKRKRPNPSQKDSSKSKSRKRQGQ). A PHD-type 3 zinc finger spans residues 1416 to 1471 (FKSCQARSCLKPFGDSVNWVMCDAGCKNWFHVICVGFTLREINDMHEYRCSSCLDH).

It belongs to the JARID1 histone demethylase family. Fe(2+) is required as a cofactor.

Its subcellular location is the nucleus. The catalysed reaction is N(6),N(6),N(6)-trimethyl-L-lysyl(4)-[histone H3] + 3 2-oxoglutarate + 3 O2 = L-lysyl(4)-[histone H3] + 3 formaldehyde + 3 succinate + 3 CO2. Functionally, histone demethylase that specifically demethylates 'Lys-4' of histone H3, thereby playing a central role in histone code. Does not demethylate histone H3 'Lys-9', H3 'Lys-27', H3 'Lys-36', H3 'Lys-79' or H4 'Lys-20'. Demethylates trimethylated and dimethylated but not monomethylated H3 'Lys-4'. Involved in larval development and vulva formation. This chain is Lysine-specific demethylase rbr-2 (rbr-2), found in Caenorhabditis briggsae.